Reading from the N-terminus, the 384-residue chain is tRNA-dihydrouridine(20) synthase [NAD(P)+] (384 aa).

Residues 12-14 and glutamine 88 contribute to the FMN site; that span reads PMV. The active-site Proton donor is the cysteine 117. Residues lysine 160, histidine 188, 222 to 224, and 249 to 250 each bind FMN; these read NGA and AE. Residues 359 to 384 form a disordered region; the sequence is KQKRKQTDHIGSDTKKQKVVPLPTDI. Positions 363–374 are enriched in basic and acidic residues; that stretch reads KQTDHIGSDTKK.

Belongs to the Dus family. Dus2 subfamily. Monomer. The cofactor is FMN. In terms of processing, N-glycosylated.

The protein localises to the cytoplasm. Its subcellular location is the nucleus. It catalyses the reaction 5,6-dihydrouridine(20) in tRNA + NADP(+) = uridine(20) in tRNA + NADPH + H(+). The enzyme catalyses 5,6-dihydrouridine(20) in tRNA + NAD(+) = uridine(20) in tRNA + NADH + H(+). It carries out the reaction a 5,6-dihydrouridine in mRNA + NAD(+) = a uridine in mRNA + NADH + H(+). The catalysed reaction is a 5,6-dihydrouridine in mRNA + NADP(+) = a uridine in mRNA + NADPH + H(+). Functionally, catalyzes the NADPH-dependent synthesis of dihydrouridine, a modified base found in the D-loop of most tRNAs. Specifically modifies U20 in cytoplasmic tRNAs. Also able to mediate dihydrouridylation of some mRNAs, thereby affecting their translation. This Saccharomyces cerevisiae (strain ATCC 204508 / S288c) (Baker's yeast) protein is tRNA-dihydrouridine(20) synthase [NAD(P)+] (SMM1).